Reading from the N-terminus, the 187-residue chain is Tetratricopeptide repeat protein 36 (187 aa).

3 TPR repeats span residues 47–80 (VKDL…LPQR), 82–114 (SAYN…SNGK), and 119–152 (CQAL…GSEF).

Belongs to the TTC36 family.

The polypeptide is Tetratricopeptide repeat protein 36 (ttc36) (Danio rerio (Zebrafish)).